A 122-amino-acid polypeptide reads, in one-letter code: Large ribosomal subunit protein bL12 (122 aa).

Belongs to the bacterial ribosomal protein bL12 family. As to quaternary structure, homodimer. Part of the ribosomal stalk of the 50S ribosomal subunit. Forms a multimeric L10(L12)X complex, where L10 forms an elongated spine to which 2 to 4 L12 dimers bind in a sequential fashion. Binds GTP-bound translation factors.

Forms part of the ribosomal stalk which helps the ribosome interact with GTP-bound translation factors. Is thus essential for accurate translation. This is Large ribosomal subunit protein bL12 from Streptococcus sanguinis (strain SK36).